A 425-amino-acid chain; its full sequence is uncharacterized protein (425 aa).

Positions 1–57 (MKDKPLKLTVEKLVYGGYGFSRLNGKAVFVRFASPKELVEAKVVKEKKDYTEAVVTK) constitute a TRAM domain. 4 residues coordinate [4Fe-4S] cluster: C70, C76, C79, and C153. S-adenosyl-L-methionine-binding residues include Q260, D308, and D354. C381 functions as the Nucleophile in the catalytic mechanism.

It belongs to the class I-like SAM-binding methyltransferase superfamily. RNA M5U methyltransferase family.

This is an uncharacterized protein from Aquifex aeolicus (strain VF5).